Consider the following 368-residue polypeptide: Peptidoglycan-recognition protein LA (368 aa).

Residues 1–127 are Cytoplasmic-facing; sequence MFEENNSPTT…KSPSRRVTRN (127 aa). Disordered stretches follow at residues 21–46 and 101–122; these read QRASPAQRLHNLTSAGSSTSSSGLPL and INSNNANGNGNANRSRDKSPSR. Low complexity-rich tracts occupy residues 33–43 and 102–113; these read TSAGSSTSSSG and NSNNANGNGNAN. A helical membrane pass occupies residues 128 to 148; the sequence is TILLITLILLVLATGLIVLYV. The Extracellular segment spans residues 149-368; that stretch reads ELNRPKPELP…MKTESWDAKQ (220 aa). A disulfide bond links cysteine 221 and cysteine 227. In terms of domain architecture, N-acetylmuramoyl-L-alanine amidase spans 233–320; the sequence is TIQDSAIAEK…DVDYKLVAQN (88 aa). Residues asparagine 273 and asparagine 320 are each glycosylated (N-linked (GlcNAc...) asparagine).

The protein belongs to the N-acetylmuramoyl-L-alanine amidase 2 family. Expressed in uninduced hemocytes and mbn-2 cells.

It localises to the cell membrane. In terms of biological role, peptidoglycan-recognition protein probably involved in innate immunity by binding to peptidoglycans (PGN) of bacteria and activating the immune response. This chain is Peptidoglycan-recognition protein LA (PGRP-LA), found in Drosophila melanogaster (Fruit fly).